Consider the following 76-residue polypeptide: MQTVLIALLRFYKVAVSPMLGNRCRFYPSCSDYAREAIQYHGAARGTYLAARRICRCHPFSAGGIDLVPPPTSEKR.

It belongs to the UPF0161 family.

It localises to the cell inner membrane. Its function is as follows. Could be involved in insertion of integral membrane proteins into the membrane. In Paraburkholderia phytofirmans (strain DSM 17436 / LMG 22146 / PsJN) (Burkholderia phytofirmans), this protein is Putative membrane protein insertion efficiency factor.